A 344-amino-acid polypeptide reads, in one-letter code: MLEQTDLSLEQLLKNYYETTNEKIVFVNRQGKIIAMNDAAKDILTEEDNYNAMTNAICHRCEGYSNEYDVQSCKDCFLETTQLQHSNFQVFMKTKDNEIKPFTAMYQNIDEQRGISAFTLQNVAPQIERQEKMYQQKMLHRSIQAQENERKRISRELHDSVIQDMLNIDVELRLLKYKHRDKVLAETSQRIEGLLSQLIDDIRNMSVELRPSSLDDLGIEAAFKSYFKQFEENYGMHIKYDSNIKGMRFDNEIETVVYRVVQEGVFNALKYAEVNEIEVSTHSDGKQLVAEVVDRGKGFSLDHHPKGSGLGLYGMRERAELVNGHVNIETHINRGTIITLDIPI.

Positions 58, 61, 73, and 76 each coordinate [4Fe-4S] cluster. A Histidine kinase domain is found at 147 to 344 (ENERKRISRE…GTIITLDIPI (198 aa)). Histidine 158 bears the Phosphohistidine; by autocatalysis mark.

[4Fe-4S] cluster is required as a cofactor. Post-translationally, autophosphorylated.

It is found in the cytoplasm. The catalysed reaction is ATP + protein L-histidine = ADP + protein N-phospho-L-histidine.. Its function is as follows. Member of the two-component regulatory system NreB/NreC involved in the control of dissimilatory nitrate/nitrite reduction in response to oxygen. NreB functions as a direct oxygen sensor histidine kinase which is autophosphorylated, in the absence of oxygen, probably at the conserved histidine residue, and transfers its phosphate group probably to a conserved aspartate residue of NreC. NreB/NreC activates the expression of the nitrate (narGHJI) and nitrite (nir) reductase operons, as well as the putative nitrate transporter gene narT. This Staphylococcus epidermidis (strain ATCC 12228 / FDA PCI 1200) protein is Oxygen sensor histidine kinase NreB (nreB).